A 259-amino-acid chain; its full sequence is MTASSTQPASVGIFFNRQYPTLEAVCDRWGLVFDENALFELVFEDNCLVLNKRDEPKLKGIFVDFVSGAVAHRRKFGGGRGQAIAKAVGLKQGVTPSVVDGTAGLGRDAFVLASLGCNVTMVERNPVVAALLEDGLRRAYEDADIGPWMQERMRLVHGSSLTALAELGEQVDVVYLDPMYPHREKSALVKKEMRVFQSLVGADLDADGLLAPAMALASKRVVVKRPDYAEDLDGVKPNTRIETKKNRFDVYVKAAMKSE.

S-adenosyl-L-methionine is bound by residues 107-108 (RD), 123-124 (ER), 159-160 (SS), and aspartate 177.

Belongs to the methyltransferase superfamily. RsmJ family.

It localises to the cytoplasm. The enzyme catalyses guanosine(1516) in 16S rRNA + S-adenosyl-L-methionine = N(2)-methylguanosine(1516) in 16S rRNA + S-adenosyl-L-homocysteine + H(+). Specifically methylates the guanosine in position 1516 of 16S rRNA. This is Ribosomal RNA small subunit methyltransferase J from Shewanella loihica (strain ATCC BAA-1088 / PV-4).